The chain runs to 186 residues: MRRLAVIASLAWALGGCATVAPPPQAAIPVPLADAWTLQGRLGVQTERESLSGQIRWQHGGGVDQVLLTSPLGQGVARIVRDPEGVSLELPGQPVRRATDVDTLTRDALGYELPVAGLAWWIQARPDPLREAAVALGDDGRPARIVQDGWTIDYLQYGADARPRKLVVSRAGLEIRLVADSWQSAP.

Residues 1-16 (MRRLAVIASLAWALGG) form the signal peptide. A lipid anchor (N-palmitoyl cysteine) is attached at C17. C17 is lipidated: S-diacylglycerol cysteine.

The protein belongs to the LolB family. Monomer.

The protein resides in the cell outer membrane. Functionally, plays a critical role in the incorporation of lipoproteins in the outer membrane after they are released by the LolA protein. This Thiobacillus denitrificans (strain ATCC 25259 / T1) protein is Outer-membrane lipoprotein LolB.